Here is a 172-residue protein sequence, read N- to C-terminus: NADH-quinone oxidoreductase subunit B (172 aa).

Cys46, Cys47, Cys111, and Cys141 together coordinate [4Fe-4S] cluster.

This sequence belongs to the complex I 20 kDa subunit family. NDH-1 is composed of 14 different subunits. Subunits NuoB, C, D, E, F, and G constitute the peripheral sector of the complex. [4Fe-4S] cluster serves as cofactor.

It is found in the cell membrane. The enzyme catalyses a quinone + NADH + 5 H(+)(in) = a quinol + NAD(+) + 4 H(+)(out). NDH-1 shuttles electrons from NADH, via FMN and iron-sulfur (Fe-S) centers, to quinones in the respiratory chain. The immediate electron acceptor for the enzyme in this species is believed to be a menaquinone. Couples the redox reaction to proton translocation (for every two electrons transferred, four hydrogen ions are translocated across the cytoplasmic membrane), and thus conserves the redox energy in a proton gradient. The sequence is that of NADH-quinone oxidoreductase subunit B from Bacillus mycoides (strain KBAB4) (Bacillus weihenstephanensis).